We begin with the raw amino-acid sequence, 201 residues long: Lymphocyte antigen 6 complex locus protein G5b (201 aa).

Residues Met-1–Gly-18 form the signal peptide. The UPAR/Ly6 domain occupies Arg-26–Glu-118. Intrachain disulfides connect Cys-28/Cys-55, Cys-31/Cys-40, Cys-47/Cys-73, Cys-81/Cys-98, and Cys-99/Cys-104. N-linked (GlcNAc...) asparagine glycans are attached at residues Asn-141 and Asn-183.

As to quaternary structure, forms oligomer. N-glycosylated.

It localises to the secreted. The chain is Lymphocyte antigen 6 complex locus protein G5b (LY6G5B) from Homo sapiens (Human).